The sequence spans 127 residues: Large ribosomal subunit protein bL12 (127 aa).

This sequence belongs to the bacterial ribosomal protein bL12 family. As to quaternary structure, homodimer. Part of the ribosomal stalk of the 50S ribosomal subunit. Forms a multimeric L10(L12)X complex, where L10 forms an elongated spine to which 2 to 4 L12 dimers bind in a sequential fashion. Binds GTP-bound translation factors.

In terms of biological role, forms part of the ribosomal stalk which helps the ribosome interact with GTP-bound translation factors. Is thus essential for accurate translation. The protein is Large ribosomal subunit protein bL12 of Nitratiruptor sp. (strain SB155-2).